The primary structure comprises 587 residues: Arginine--tRNA ligase (587 aa).

The 'HIGH' region signature appears at 127-137; it reads PNLAKEMHVGH.

It belongs to the class-I aminoacyl-tRNA synthetase family. In terms of assembly, monomer.

The protein localises to the cytoplasm. It catalyses the reaction tRNA(Arg) + L-arginine + ATP = L-arginyl-tRNA(Arg) + AMP + diphosphate. The sequence is that of Arginine--tRNA ligase from Pseudomonas aeruginosa (strain UCBPP-PA14).